The sequence spans 1072 residues: Zn(2)-C6 fungal-type transcription factor FTF2 (1072 aa).

The segment at residues 179–206 is a DNA-binding region (zn(2)-C6 fungal-type); it reads CIACRRKKIRCSGEKPACKHCLRSRIPC.

The protein resides in the nucleus. Zn(2)-C6 fungal-type transcription factor that has a role in conidia production and also in plant colonization. Acts as a negative regulator of the production of macroconidia and is required for full virulence and the positive regulation of SIX effectors. In addition, FTF2 is also involved in the regulation of class II hydrophobins FOXG_02746 and FOXG_02748 likely required for plant colonization. This Fusarium oxysporum f. sp. lycopersici (strain 4287 / CBS 123668 / FGSC 9935 / NRRL 34936) (Fusarium vascular wilt of tomato) protein is Zn(2)-C6 fungal-type transcription factor FTF2.